Reading from the N-terminus, the 1055-residue chain is TNF receptor-associated factor homolog 1a (1055 aa).

A disordered region spans residues 1–56; sequence MSESTNEDSGAGRSSLEENSNGQRSQSEEAIAEWRSSEQVENGTPSTSPPYWDIDD. A compositionally biased stretch (polar residues) spans 37–46; that stretch reads SEQVENGTPS. The MATH domain maps to 68 to 191; the sequence is FGKNTWTIEK…SGCLTIKAQV (124 aa). Disordered regions lie at residues 352 to 380, 431 to 590, 603 to 772, and 820 to 845; these read PKKEEKSSQNRTKDGNAGEEFSREAVERD, AESE…NGSY, FSNG…APII, and VGSSGFTHPSSQSSGTSTLPPYSHPS. Basic and acidic residues predominate over residues 433 to 446; it reads SEQKGKRGASEKEK. A coiled-coil region spans residues 441-496; that stretch reads ASEKEKKSKKKQAKQKKNKNKGKEMRKEDKVRTQTEEREIEKEECVRAIAESSAEK. Residues 447-460 are compositionally biased toward basic residues; the sequence is KSKKKQAKQKKNKN. Residues 461-486 show a composition bias toward basic and acidic residues; sequence KGKEMRKEDKVRTQTEEREIEKEECV. Low complexity predominate over residues 502-513; sequence DVSDVSDSVDSS. A compositionally biased stretch (basic and acidic residues) spans 524-537; it reads RESSPVHWEMDASE. Residues 569–586 show a composition bias toward polar residues; the sequence is MDDSSSTCSNDSIQSGVA. Over residues 657 to 668 the composition is skewed to basic and acidic residues; the sequence is QKPESPKERSPV. Polar residues-rich tracts occupy residues 723–740 and 823–845; these read KSPSSHHASPSREAQLQT and SGFTHPSSQSSGTSTLPPYSHPS.

As to quaternary structure, interacts with AHK3. Interacts with ATG6, SINAT1, SINAT2, SINAT5 and SINAT6.

It localises to the cytoplasm. In terms of biological role, functions redundantly with TRAF1B in the regulation of plant immune response. Contributes to the turnover of the nucleotide-binding domain and leucine-rich repeat-containing (NB-LRR) immune receptors SNC1 and RPS2. May associate with an E3 ubiquitin-protein ligase complex, which modulates ubiquitination and subsequent degradation of NB-LRR immune sensors to maintain their homeostasis. Functions redundantly with TRAF1B in the regulation of autophagosome formation. Required for SINAT1- and SINAT2-mediated ubiquitination and destabilization of ATG6. Functions as a molecular adapter that helps to regulate autophagy by modulating ATG6 stability. The polypeptide is TNF receptor-associated factor homolog 1a (Arabidopsis thaliana (Mouse-ear cress)).